A 594-amino-acid polypeptide reads, in one-letter code: UvrABC system protein C (594 aa).

Residues 13–99 enclose the GIY-YIG domain; sequence SSSGVYQYFD…IKQLKPKYNI (87 aa). A UVR domain is found at 205–240; that stretch reads DRLIKELELKMERLSSNLRFEEALIYRDRIAKIQKI.

The protein belongs to the UvrC family. Interacts with UvrB in an incision complex.

Its subcellular location is the cytoplasm. Its function is as follows. The UvrABC repair system catalyzes the recognition and processing of DNA lesions. UvrC both incises the 5' and 3' sides of the lesion. The N-terminal half is responsible for the 3' incision and the C-terminal half is responsible for the 5' incision. The chain is UvrABC system protein C from Helicobacter pylori (strain J99 / ATCC 700824) (Campylobacter pylori J99).